A 31-amino-acid chain; its full sequence is Elongation factor Tu (31 aa).

It belongs to the GTP-binding elongation factor family. EF-Tu/EF-1A subfamily. As to quaternary structure, monomer.

The protein resides in the cytoplasm. This protein promotes the GTP-dependent binding of aminoacyl-tRNA to the A-site of ribosomes during protein biosynthesis. The chain is Elongation factor Tu (tuf) from Streptomyces laurentii.